A 260-amino-acid chain; its full sequence is Carbonic anhydrase 3 (260 aa).

An N-acetylalanine modification is found at A2. The Alpha-carbonic anhydrase domain occupies 3–259 (KEWGYASHNG…IKGRVVRASF (257 aa)). 5 positions are modified to phosphoserine: S29, S43, S48, S50, and S55. The interval 64–67 (KTCR) is involved in proton transfer. A Phosphothreonine modification is found at T73. Zn(2+) contacts are provided by H94, H96, and H119. Y127 is modified (phosphotyrosine). T129 is modified (phosphothreonine). 2 positions are modified to S-glutathionyl cysteine: C182 and C187. 198–199 (TT) contacts substrate. A Phosphothreonine modification is found at T216. S219 is subject to Phosphoserine.

It belongs to the alpha-carbonic anhydrase family. Zn(2+) serves as cofactor. In terms of processing, S-thiolated both by thiol-disulfide exchange with glutathione disulfide and by oxyradical-initiated S-thiolation with reduced glutathione. Post-translationally, S-glutathionylated in hepatocytes under oxidative stress. Expressed in liver and muscle.

The protein resides in the cytoplasm. The catalysed reaction is hydrogencarbonate + H(+) = CO2 + H2O. Inhibited by acetazolamide. Its function is as follows. Reversible hydration of carbon dioxide. The protein is Carbonic anhydrase 3 (Ca3) of Rattus norvegicus (Rat).